Consider the following 865-residue polypeptide: Rifampicin phosphotransferase (865 aa).

The ATP-binding stretch occupies residues 2 to 314 (SGRLVVDLQD…FHIVQSRPIT (313 aa)). 8 residues coordinate ATP: Lys23, Arg117, Gly132, Thr136, Gln183, Glu297, Gln309, and Arg311. Residues 327-752 (FRVYLSVGHQ…TSEGVALSGA (426 aa)) form a rifampicin-binding region. The tract at residues 403 to 430 (ENGEFEPTPAETDGGAPPAGDGAEPDEA) is disordered. A compositionally biased stretch (low complexity) spans 409–424 (PTPAETDGGAPPAGDG). The interval 765–863 (GLAVSAGTVE…VHGTEGYIEL (99 aa)) is swivel phosphohistidine. His823 (tele-phosphohistidine intermediate) is an active-site residue.

It belongs to the rifampicin phosphotransferase family.

The catalysed reaction is rifampicin + ATP + H2O = 21-phosphorifampicin + AMP + phosphate + 2 H(+). Functionally, catalyzes the phosphorylation of rifampicin, also known as rifampin (RIF), leading to its inactivation. Confers high level resistance to a variety of clinically used rifamycin antibiotics. This is Rifampicin phosphotransferase from Streptomyces sp.